A 111-amino-acid chain; its full sequence is Large ribosomal subunit protein eL31 (111 aa).

Belongs to the eukaryotic ribosomal protein eL31 family.

The chain is Large ribosomal subunit protein eL31 (RPL31) from Encephalitozoon cuniculi (strain GB-M1) (Microsporidian parasite).